The sequence spans 440 residues: 5-methylthioadenosine/S-adenosylhomocysteine deaminase (440 aa).

Zn(2+) contacts are provided by His-70 and His-72. Substrate is bound by residues Glu-99 and His-191. His-218 serves as a coordination point for Zn(2+). Positions 221 and 306 each coordinate substrate. Asp-306 contacts Zn(2+).

It belongs to the metallo-dependent hydrolases superfamily. MTA/SAH deaminase family. The cofactor is Zn(2+).

It catalyses the reaction S-adenosyl-L-homocysteine + H2O + H(+) = S-inosyl-L-homocysteine + NH4(+). The catalysed reaction is S-methyl-5'-thioadenosine + H2O + H(+) = S-methyl-5'-thioinosine + NH4(+). Its function is as follows. Catalyzes the deamination of 5-methylthioadenosine and S-adenosyl-L-homocysteine into 5-methylthioinosine and S-inosyl-L-homocysteine, respectively. Is also able to deaminate adenosine. In Nitratidesulfovibrio vulgaris (strain DSM 19637 / Miyazaki F) (Desulfovibrio vulgaris), this protein is 5-methylthioadenosine/S-adenosylhomocysteine deaminase.